The chain runs to 347 residues: 8-amino-8-demethylriboflavin N,N-dimethyltransferase (347 aa).

S-adenosyl-L-methionine contacts are provided by residues Asp-209 and 235-237 (GDF).

Belongs to the class I-like SAM-binding methyltransferase superfamily. Cation-independent O-methyltransferase family. As to quaternary structure, homodimer.

The enzyme catalyses 8-amino-8-demethylriboflavin + 2 S-adenosyl-L-methionine = roseoflavin + 2 S-adenosyl-L-homocysteine + 2 H(+). It functions in the pathway antibiotic biosynthesis. Functionally, catalyzes the S-adenosyl methionine-dependent conversion of 8-amino-8-demethyl-D-riboflavin (AF) into 8-methylamino-8-demethyl-D-riboflavin (MAF) and roseoflavin (RoF), the last two steps in the biosynthesis of the antibiotic roseoflavin. The sequence is that of 8-amino-8-demethylriboflavin N,N-dimethyltransferase from Streptomyces davaonensis (strain DSM 101723 / JCM 4913 / KCC S-0913 / 768).